A 418-amino-acid chain; its full sequence is AA14 family lytic polysaccharide monooxygenase B (418 aa).

The N-terminal stretch at 1-18 is a signal peptide; the sequence is MIPVFLAAVAAFLPLTSG. Asparagine 31, asparagine 94, and asparagine 151 each carry an N-linked (GlcNAc...) asparagine glycan. 4 disulfide bridges follow: cysteine 85-cysteine 108, cysteine 127-cysteine 154, cysteine 171-cysteine 176, and cysteine 178-cysteine 200. N-linked (GlcNAc...) asparagine glycans are attached at residues asparagine 201 and asparagine 235. The cysteines at positions 220 and 236 are disulfide-linked. The span at 307–343 shows a compositional bias: low complexity; sequence AAATPAPSSSGSSPSSSSPGSSSTASTTSTSGPRPSA. Residues 307–364 are disordered; the sequence is AAATPAPSSSGSSPSSSSPGSSSTASTTSTSGPRPSARGFRRSTGERPPTGVPTPRKS.

It belongs to the polysaccharide monooxygenase AA14 family. Cu(2+) serves as cofactor.

The protein resides in the secreted. In terms of biological role, lytic polysaccharide monooxygenase (LPMO) that oxidatively cleaves xylan with both C1 and C4 regioselectivity and that specifically targets the protective shield made by heteroxylans that cover cellulose microfibrils in wood. Catalysis by LPMOs requires the reduction of the active-site copper from Cu(II) to Cu(I) by a reducing agent and H(2)O(2) or O(2) as a cosubstrate. Cleavage occurs only when xylans are bound to cellulose and not when they are in solution. Increases the efficiency of wood saccharification through oxidative cleavage of highly refractory xylan-coated cellulose fibers via synergistic relationship with xylan-active enzymes, xylobiohydrolases and cellobiohydrolases. The sequence is that of AA14 family lytic polysaccharide monooxygenase B from Trametes coccinea (strain BRFM310) (Pycnoporus coccineus).